The chain runs to 108 residues: PTS system galactose-specific EIIB component (108 aa).

One can recognise a PTS EIIB type-3 domain in the interval 3–108 (DKVIALACAA…VLAAAENLMN (106 aa)). Cys-10 serves as the catalytic Phosphocysteine intermediate. Cys-10 is subject to Phosphocysteine; by EIIA.

The catalysed reaction is N(pros)-phospho-L-histidyl-[protein] + D-galactose(out) = D-galactose 6-phosphate(in) + L-histidyl-[protein]. Functionally, the phosphoenolpyruvate-dependent sugar phosphotransferase system (sugar PTS), a major carbohydrate active transport system, catalyzes the phosphorylation of incoming sugar substrates concomitantly with their translocation across the cell membrane. Involved in galactose transport with PtcA and Lmg_0963. This Lactococcus lactis subsp. cremoris (strain MG1363) protein is PTS system galactose-specific EIIB component.